Here is a 625-residue protein sequence, read N- to C-terminus: Phosphomethylpyrimidine synthase (625 aa).

Residues Asn-230, Met-259, Tyr-288, His-324, 344–346 (SRG), 385–388 (DGLR), and Glu-424 each bind substrate. His-428 contacts Zn(2+). Tyr-451 contributes to the substrate binding site. A Zn(2+)-binding site is contributed by His-492. [4Fe-4S] cluster-binding residues include Cys-572, Cys-575, and Cys-580.

This sequence belongs to the ThiC family. In terms of assembly, homodimer. [4Fe-4S] cluster is required as a cofactor.

The catalysed reaction is 5-amino-1-(5-phospho-beta-D-ribosyl)imidazole + S-adenosyl-L-methionine = 4-amino-2-methyl-5-(phosphooxymethyl)pyrimidine + CO + 5'-deoxyadenosine + formate + L-methionine + 3 H(+). Its pathway is cofactor biosynthesis; thiamine diphosphate biosynthesis. Functionally, catalyzes the synthesis of the hydroxymethylpyrimidine phosphate (HMP-P) moiety of thiamine from aminoimidazole ribotide (AIR) in a radical S-adenosyl-L-methionine (SAM)-dependent reaction. The sequence is that of Phosphomethylpyrimidine synthase from Xanthomonas oryzae pv. oryzae (strain MAFF 311018).